The sequence spans 687 residues: Probable ATP-dependent RNA helicase Dbp73D (687 aa).

Disordered regions lie at residues 1-26 (MELF…TNNE) and 52-87 (TPIL…EEDV). Basic and acidic residues-rich tracts occupy residues 9-18 (YTEDLKEQKD) and 54-79 (ILEK…EKPL). The Q motif motif lies at 160–168 (LFPVQKQVI). In terms of domain architecture, Helicase ATP-binding spans 177 to 381 (KPPPFRPRDI…DLRLFQPRLF (205 aa)). An ATP-binding site is contributed by 190–197 (APTGSGKT). The DEAD box signature appears at 305–308 (DEAD). The region spanning 434 to 583 (TVFALVEKYK…EIHVSPDIEI (150 aa)) is the Helicase C-terminal domain. Positions 646–675 (IVQSSKKSSETKNSKTKADKTKYQPKETKK) are disordered. Basic and acidic residues predominate over residues 652–675 (KSSETKNSKTKADKTKYQPKETKK).

Belongs to the DEAD box helicase family. DDX51/DBP6 subfamily. In terms of tissue distribution, expressed in the germline tissue of the ovary.

It is found in the nucleus. It localises to the nucleolus. It carries out the reaction ATP + H2O = ADP + phosphate + H(+). In terms of biological role, ATP-binding RNA helicase involved in the biogenesis of 60S ribosomal subunits. The polypeptide is Probable ATP-dependent RNA helicase Dbp73D (Dbp73D) (Drosophila melanogaster (Fruit fly)).